The chain runs to 275 residues: MSNLQAVIEEAFERRADITPKTVDAATRAAIEEVIEGLDSGKFRVAEKIDGEWVTHQWLKKAVLLSFRINENEIIDGAETKYYDKVALKFADYSEERFAQEGFRVVPSATVRKGAYISKNTVLMPSYVNIGAYVGEGTMVDTWATVGSCAQIGKNVHLSGGVGIGGVLEPLQANPTIIGDNCFIGARSEVVEGVIVEDGCVISMGVFIGQSTKIYDRETGEIHYGRVPAGSVVVSGSLPSKDGKYSLYCAVIVKKVDAKTLGKVGINELLRSIEE.

Residues Arg104 and Asp141 each coordinate substrate.

This sequence belongs to the transferase hexapeptide repeat family. In terms of assembly, homotrimer.

The protein localises to the cytoplasm. It catalyses the reaction (S)-2,3,4,5-tetrahydrodipicolinate + succinyl-CoA + H2O = (S)-2-succinylamino-6-oxoheptanedioate + CoA. It participates in amino-acid biosynthesis; L-lysine biosynthesis via DAP pathway; LL-2,6-diaminopimelate from (S)-tetrahydrodipicolinate (succinylase route): step 1/3. The protein is 2,3,4,5-tetrahydropyridine-2,6-dicarboxylate N-succinyltransferase of Actinobacillus succinogenes (strain ATCC 55618 / DSM 22257 / CCUG 43843 / 130Z).